The chain runs to 319 residues: 4-diphosphocytidyl-2-C-methyl-D-erythritol kinase (319 aa).

Residue Lys18 is part of the active site. Position 103–113 (103–113) interacts with ATP; that stretch reads PIGAGLAGGST. Asp145 is an active-site residue.

It belongs to the GHMP kinase family. IspE subfamily.

The enzyme catalyses 4-CDP-2-C-methyl-D-erythritol + ATP = 4-CDP-2-C-methyl-D-erythritol 2-phosphate + ADP + H(+). It participates in isoprenoid biosynthesis; isopentenyl diphosphate biosynthesis via DXP pathway; isopentenyl diphosphate from 1-deoxy-D-xylulose 5-phosphate: step 3/6. Its function is as follows. Catalyzes the phosphorylation of the position 2 hydroxy group of 4-diphosphocytidyl-2C-methyl-D-erythritol. This chain is 4-diphosphocytidyl-2-C-methyl-D-erythritol kinase, found in Prochlorococcus marinus (strain NATL1A).